Reading from the N-terminus, the 831-residue chain is von Willebrand factor A domain-containing protein DDB_G0285981 (831 aa).

The VIT domain maps to 60 to 188; the sequence is RDTFGLKTFS…NVTIHLTIIS (129 aa). A VWFA domain is found at 312–480; sequence EFIFLIDCSG…NFEEQVMKLV (169 aa).

The protein is von Willebrand factor A domain-containing protein DDB_G0285981 of Dictyostelium discoideum (Social amoeba).